We begin with the raw amino-acid sequence, 332 residues long: Ketol-acid reductoisomerase (NADP(+)) (332 aa).

One can recognise a KARI N-terminal Rossmann domain in the interval 1–182 (MAQTWKDTDI…GSARAGLIKT (182 aa)). NADP(+) is bound by residues 25-28 (YGIQ), K48, S53, and 83-86 (DMIQ). H108 is an active-site residue. G134 lines the NADP(+) pocket. Residues 183-329 (AFKEEVETDW…KEMRKMMWPD (147 aa)) form the KARI C-terminal knotted domain. Residues D191, E195, E227, and E231 each contribute to the Mg(2+) site. S252 lines the substrate pocket.

Belongs to the ketol-acid reductoisomerase family. It depends on Mg(2+) as a cofactor.

It carries out the reaction (2R)-2,3-dihydroxy-3-methylbutanoate + NADP(+) = (2S)-2-acetolactate + NADPH + H(+). It catalyses the reaction (2R,3R)-2,3-dihydroxy-3-methylpentanoate + NADP(+) = (S)-2-ethyl-2-hydroxy-3-oxobutanoate + NADPH + H(+). It participates in amino-acid biosynthesis; L-isoleucine biosynthesis; L-isoleucine from 2-oxobutanoate: step 2/4. The protein operates within amino-acid biosynthesis; L-valine biosynthesis; L-valine from pyruvate: step 2/4. Functionally, involved in the biosynthesis of branched-chain amino acids (BCAA). Catalyzes an alkyl-migration followed by a ketol-acid reduction of (S)-2-acetolactate (S2AL) to yield (R)-2,3-dihydroxy-isovalerate. In the isomerase reaction, S2AL is rearranged via a Mg-dependent methyl migration to produce 3-hydroxy-3-methyl-2-ketobutyrate (HMKB). In the reductase reaction, this 2-ketoacid undergoes a metal-dependent reduction by NADPH to yield (R)-2,3-dihydroxy-isovalerate. The chain is Ketol-acid reductoisomerase (NADP(+)) from Nitrosopumilus maritimus (strain SCM1).